We begin with the raw amino-acid sequence, 520 residues long: MFAQPYDHSFNDLFNQYVNMETSAADGKDSTLSDFDQLFPLDSLSSDCGDLPPTVSTPNCHQSPQPWSNEWSLQNDGPAVDHFAFHDTVPLSAISDVNLNNFEVLSRPTATHALSTSPSTPPATPRRKPTQSALITPKSIRHRCPNERRSHLCKQSFSPSLMRSSNLSKARMAYPEAWAQQIQSFSLQSSEDRLPLSPPPSDVLIQHENRPAEQIMHQTRDSVEMPSQYDARLYHQPPSVSMPSPNIAMSARQPQHYIAHPSSSTLTNSSPSSADDMFSSSHSSDPHSLSSWQSDHLHPPSFSFTPDLQCQDSQWWSPMTSRVAQQQASYLTSPTPVRTMQSVGSQNDIMQGGLMIQFNPSYDMPADHSFSSNNMLPVAPQKFDTSFTTSQVHNVSRSPSLSPKAGTSPRDTHNGSISKPVHRRTHSRKLSGQSMNAPKPAKASGSSSRGSNKSVSVSFVNFTAHDSKKILTGVAPSGSSKTKARREQEARDRRRKLSEAALRAVRSAGGDVEALEAVLC.

4 disordered regions span residues 110–149 (ATHALSTSPSTPPATPRRKPTQSALITPKSIRHRCPNERR), 260–294 (HPSSSTLTNSSPSSADDMFSSSHSSDPHSLSSWQS), 388–453 (TTSQ…GSNK), and 471–496 (LTGVAPSGSSKTKARREQEARDRRRK). Over residues 261–294 (PSSSTLTNSSPSSADDMFSSSHSSDPHSLSSWQS) the composition is skewed to low complexity. Residues 388–401 (TTSQVHNVSRSPSL) are compositionally biased toward polar residues. Positions 420 to 429 (PVHRRTHSRK) are enriched in basic residues. Low complexity predominate over residues 436–453 (NAPKPAKASGSSSRGSNK).

The protein belongs to the wetA family.

Functionally, brlA, abaA and wetA are pivotal regulators of conidiophore development and conidium maturation. They act individually and together to regulate their own expression and that of numerous other sporulation-specific genes. Plays a crucial role in pigmentation and conidial cell wall integrity. This is Developmental regulatory protein wetA from Penicillium digitatum (strain PHI26 / CECT 20796) (Green mold).